A 1620-amino-acid polypeptide reads, in one-letter code: ABC-type organic anion transporter ABCA8B (1620 aa).

7 consecutive transmembrane segments (helical) span residues 30-50 (SLME…YPHG), 223-243 (FFIF…SINV), 267-287 (SWGL…ALVI), 298-318 (FMVV…LAFL), 326-346 (SVLT…LGFT), 352-372 (LPAP…TLGM), and 396-416 (LIIA…ALMM). One can recognise an ABC transporter 1 domain in the interval 479–714 (IRIRNISKEY…WGVGYHLSLQ (236 aa)). Position 515–522 (515–522 (GHSGAGKS)) interacts with ATP. A glycan (N-linked (GlcNAc...) asparagine) is linked at Asn723. 8 consecutive transmembrane segments (helical) span residues 860 to 880 (TLLS…FENI), 979 to 999 (CFPV…KPSA), 1023 to 1043 (TAFW…SSVT), 1069 to 1089 (MVDI…DYLF), 1105 to 1125 (IPCS…ISFI), 1135 to 1155 (IWSL…LLAF), 1164 to 1184 (IIFL…LHLF), and 1194 to 1214 (VIEP…FIFT). The ABC transporter 2 domain occupies 1283–1516 (LRKEYAGKQK…FGKDYLLEMK (234 aa)). 1321–1328 (GHNGAGKS) provides a ligand contact to ATP.

Belongs to the ABC transporter superfamily. ABCA family. As to expression, expressed in heart, brain, lung, liver and skeletal muscle. Highly expressed in the liver, and is also abundant in heart and skeletal muscle. Highly expressed in liver.

The protein localises to the cell membrane. It localises to the basolateral cell membrane. It carries out the reaction taurocholate(in) + ATP + H2O = taurocholate(out) + ADP + phosphate + H(+). The catalysed reaction is cholesterol(in) + ATP + H2O = cholesterol(out) + ADP + phosphate + H(+). Cholesterol efflux is increased by extracellularly applied taurocholate. In terms of biological role, mediates cholesterol and taurocholate efflux. Through the interaction with ABCA1 potentiates the cholesterol efflux to lipid-free APOA1, in turn regulates high-density lipoprotein cholesterol levels. This is ABC-type organic anion transporter ABCA8B from Mus musculus (Mouse).